The chain runs to 564 residues: Arginine--tRNA ligase (564 aa).

Residues 122–132 (PNIAKPFSIGH) carry the 'HIGH' region motif.

The protein belongs to the class-I aminoacyl-tRNA synthetase family. Monomer.

Its subcellular location is the cytoplasm. The enzyme catalyses tRNA(Arg) + L-arginine + ATP = L-arginyl-tRNA(Arg) + AMP + diphosphate. This Lactococcus lactis subsp. cremoris (strain SK11) protein is Arginine--tRNA ligase.